The primary structure comprises 1398 residues: Disease resistance protein RPV1 (1398 aa).

A TIR domain is found at 22–185; it reads TTYDVFLSFR…EITNSIFRQL (164 aa). Residues 31 to 36 and glycine 63 contribute to the NAD(+) site; that span reads RGEDTR. Glutamate 97 is a catalytic residue. The NB-ARC domain maps to 201–440; sequence SHVKEMILRL…KRSYDGLDRI (240 aa). LRR repeat units follow at residues 203-225, 423-447, 478-504, 535-560, 610-632, 633-657, 678-702, 703-726, 728-750, 751-773, 775-797, 798-820, 822-844, 845-867, 869-891, 892-914, 916-938, 939-961, 963-985, 986-1008, 1010-1032, 1033-1055, 1079-1102, and 1105-1128; these read VKEM…IYGV, KADI…IFLD, LNDL…GWEI, IKSV…VFAK, SYEL…NFDG, GKLV…DLER, MPNL…VGNM, KKLT…IGDL, SLES…GGNM, KSLT…IGDL, SLEI…GGNM, KSLK…IGDL, SLKY…GGNM, KRLL…IGDL, KSLL…IGDL, MKSL…IGDL, and LEML…AIDA. The segment covering 1315 to 1328 has biased composition (polar residues); it reads QNSGDNGSALQDAN. The segment at 1315 to 1336 is disordered; the sequence is QNSGDNGSALQDANGNVHGANQ. Residues 1346–1369 form an LRR 25 repeat; it reads LDLLRNLSLGDNGSVVLEDTLGNR. A Nuclear localization signal motif is present at residues 1369 to 1373; sequence RKRRR.

It belongs to the disease resistance TIR-NB-LRR family. In terms of assembly, homodimer; homodimerization is required for NAD(+) hydrolase (NADase) activity.

Its subcellular location is the nucleus. The protein localises to the cytoplasm. It catalyses the reaction NAD(+) + H2O = ADP-D-ribose + nicotinamide + H(+). Disease resistance (R) protein that confers resistance to multiple powdery and downy mildew by promoting cell death. Acts as a NAD(+) hydrolase (NADase): in response to activation, catalyzes cleavage of NAD(+) into ADP-D-ribose (ADPR) and nicotinamide; NAD(+) cleavage triggering a defense system that promotes cell death. In Vitis rotundifolia (Muscadine grape), this protein is Disease resistance protein RPV1.